Reading from the N-terminus, the 269-residue chain is 5'-nucleotidase SurE (269 aa).

A divalent metal cation is bound by residues D11, D12, S43, and N101.

The protein belongs to the SurE nucleotidase family. A divalent metal cation serves as cofactor.

Its subcellular location is the cytoplasm. It catalyses the reaction a ribonucleoside 5'-phosphate + H2O = a ribonucleoside + phosphate. Nucleotidase that shows phosphatase activity on nucleoside 5'-monophosphates. The protein is 5'-nucleotidase SurE of Synechococcus sp. (strain CC9902).